The sequence spans 320 residues: ATP-dependent 6-phosphofructokinase (320 aa).

Residue glycine 12 coordinates ATP. 22 to 26 (RGVVR) lines the ADP pocket. ATP contacts are provided by residues 73–74 (RF) and 103–106 (GDGS). A Mg(2+)-binding site is contributed by aspartate 104. Residue 126–128 (TID) participates in substrate binding. Catalysis depends on aspartate 128, which acts as the Proton acceptor. Arginine 155 contributes to the ADP binding site. Residues arginine 163 and 170-172 (MGR) each bind substrate. Residues 186–188 (GCE), lysine 212, and 214–216 (KKH) each bind ADP. Substrate is bound by residues glutamate 223, arginine 244, and 250 to 253 (HIQR).

The protein belongs to the phosphofructokinase type A (PFKA) family. ATP-dependent PFK group I subfamily. Prokaryotic clade 'B1' sub-subfamily. Homotetramer. The cofactor is Mg(2+).

It is found in the cytoplasm. The enzyme catalyses beta-D-fructose 6-phosphate + ATP = beta-D-fructose 1,6-bisphosphate + ADP + H(+). Its pathway is carbohydrate degradation; glycolysis; D-glyceraldehyde 3-phosphate and glycerone phosphate from D-glucose: step 3/4. Its activity is regulated as follows. Allosterically activated by ADP and other diphosphonucleosides, and allosterically inhibited by phosphoenolpyruvate. Its function is as follows. Catalyzes the phosphorylation of D-fructose 6-phosphate to fructose 1,6-bisphosphate by ATP, the first committing step of glycolysis. This chain is ATP-dependent 6-phosphofructokinase, found in Vibrio parahaemolyticus serotype O3:K6 (strain RIMD 2210633).